The sequence spans 492 residues: G2/mitotic-specific cyclin CYB1 (492 aa).

The tract at residues 1–176 (MPQVTKTNNE…QPEVGERSQS (176 aa)) is disordered. Residues 23 to 33 (QESISTIKNTT) are compositionally biased toward polar residues. A compositionally biased stretch (low complexity) spans 34-58 (ISNSQHKQQTQQQISSPPQVSVTSS). The span at 59–83 (EGVSHVNTRQYLGDVSNQYITNAKP) shows a compositional bias: polar residues. Low complexity predominate over residues 111-135 (ASDNNNNGSTSSSSNSSNNNNNDAN).

The protein belongs to the cyclin family. Cyclin AB subfamily.

Functionally, essential for the control of the cell cycle at the G2/M (mitosis) transition. Interacts with the CDC2 protein kinase to form MPF. G2/M cyclins accumulate steadily during G2 and are abruptly destroyed at mitosis. The protein is G2/mitotic-specific cyclin CYB1 (CYB1) of Candida albicans (Yeast).